The chain runs to 446 residues: Hepatocyte nuclear factor 4-beta (446 aa).

The nuclear receptor DNA-binding region spans 47–122; the sequence is NSFCAICGDR…AGMKKEAVQN (76 aa). 2 NR C4-type zinc fingers span residues 50-70 and 86-110; these read CAIC…CDGC and CRFS…LRKC. The NR LBD domain occupies 137–366; sequence NGSLSINVLT…SLLQELLLGG (230 aa).

The protein belongs to the nuclear hormone receptor family. NR2 subfamily. In terms of assembly, homodimerization is required for HNF4-alpha to bind to its recognition site. In terms of tissue distribution, expressed in liver, kidney, stomach, intestine, lung, ovary, and testis. Not expressed in fat, muscle and brain.

The protein resides in the nucleus. Its function is as follows. Transcription factor; binds and activates the promoter for the HNF1-alpha gene. Seems to have a lower DNA binding activity than HNF4-alpha and is a weaker transactivator than the alpha isoform. The protein is Hepatocyte nuclear factor 4-beta (hnf4b) of Xenopus laevis (African clawed frog).